The sequence spans 715 residues: Fatty acid oxidation complex subunit alpha (715 aa).

Residues 1-189 (MIYQGETLTV…KVGAIDAVVA (189 aa)) form an enoyl-CoA hydratase/isomerase region. Residue aspartate 296 coordinates substrate. Residues 311–715 (AKATSHAAVL…EMAAQGKTFY (405 aa)) are 3-hydroxyacyl-CoA dehydrogenase. Residues methionine 325, aspartate 344, 401 to 403 (VVE), lysine 408, and serine 430 contribute to the NAD(+) site. The active-site For 3-hydroxyacyl-CoA dehydrogenase activity is the histidine 451. Asparagine 454 contacts NAD(+). Positions 501 and 661 each coordinate substrate.

In the N-terminal section; belongs to the enoyl-CoA hydratase/isomerase family. It in the C-terminal section; belongs to the 3-hydroxyacyl-CoA dehydrogenase family. In terms of assembly, heterotetramer of two alpha chains (FadB) and two beta chains (FadA).

The catalysed reaction is a (3S)-3-hydroxyacyl-CoA + NAD(+) = a 3-oxoacyl-CoA + NADH + H(+). The enzyme catalyses a (3S)-3-hydroxyacyl-CoA = a (2E)-enoyl-CoA + H2O. It catalyses the reaction a 4-saturated-(3S)-3-hydroxyacyl-CoA = a (3E)-enoyl-CoA + H2O. It carries out the reaction (3S)-3-hydroxybutanoyl-CoA = (3R)-3-hydroxybutanoyl-CoA. The catalysed reaction is a (3Z)-enoyl-CoA = a 4-saturated (2E)-enoyl-CoA. The enzyme catalyses a (3E)-enoyl-CoA = a 4-saturated (2E)-enoyl-CoA. Its pathway is lipid metabolism; fatty acid beta-oxidation. In terms of biological role, involved in the aerobic and anaerobic degradation of long-chain fatty acids via beta-oxidation cycle. Catalyzes the formation of 3-oxoacyl-CoA from enoyl-CoA via L-3-hydroxyacyl-CoA. It can also use D-3-hydroxyacyl-CoA and cis-3-enoyl-CoA as substrate. The polypeptide is Fatty acid oxidation complex subunit alpha (Aeromonas hydrophila subsp. hydrophila (strain ATCC 7966 / DSM 30187 / BCRC 13018 / CCUG 14551 / JCM 1027 / KCTC 2358 / NCIMB 9240 / NCTC 8049)).